A 390-amino-acid chain; its full sequence is ATP-sensitive inward rectifier potassium channel 11 (390 aa).

Over 1–65 (MLSRKGIIPE…LQDVFTTLVD (65 aa)) the chain is Cytoplasmic. The ATP site is built by asparagine 48 and arginine 50. A helical transmembrane segment spans residues 66 to 92 (LKWTHTLLIFTMSFLCSWLLFAMVWWL). At 93 to 116 (IAFAHGDLAPGEGAAVPCVTSIHS) the chain is on the extracellular side. A disulfide bond links cysteine 110 and cysteine 142. Residues 117–133 (FSSAFLFSIEVQVTIGF) constitute an intramembrane region (discontinuously helical; Pore-forming). Positions 130 and 133 each coordinate K(+). Residues 130–135 (TIGFGG) carry the Selectivity filter motif. Residues 134–142 (GGRMVTEEC) lie on the Extracellular side of the membrane. A helical membrane pass occupies residues 143–171 (PLAILILIVQNIVGLMINAIMLGCIFMKT). The Cytoplasmic portion of the chain corresponds to 172-390 (AQAHRRAETL…KFSISPDSLS (219 aa)). Arginine 176 contributes to the a 1,2-diacyl-sn-glycero-3-phospho-(1D-myo-inositol-4,5-bisphosphate) binding site. Tyrosine 330 contributes to the ATP binding site. The residue at position 341 (threonine 341) is a Phosphothreonine; by MAPK1. A Phosphoserine; by MAPK1 modification is found at serine 385.

Belongs to the inward rectifier-type potassium channel (TC 1.A.2.1) family. KCNJ11 subfamily. As to quaternary structure, homotetramer; the homotetramer binds four ATP molecules (one ATP per subunit). Forms an heterooctamer with ABCC8/SUR1; one KCNJ11 homotetramer interacts with four ABCC8/SUR1 molecules. Interacts with ABCC9/SUR2. Phosphorylation by MAPK1 results in changes in channel gating that destabilize the closed states and reduce the ATP sensitivity.

Its subcellular location is the membrane. It carries out the reaction K(+)(in) = K(+)(out). Its activity is regulated as follows. KATP channels are regulated by cytoplasmic ATP/ADP ratios; ATP inhibits the channel by closing the pore, while ADP activates the channel. Activated by phosphatidylinositol 4,5-biphosphate (PtdIns(4,5)P2). In terms of biological role, inward rectifier potassium channel that forms the pore of ATP-sensitive potassium channels (KATP), regulating potassium permeability as a function of cytoplasmic ATP and ADP concentrations in many different cells. Inward rectifier potassium channels are characterized by a greater tendency to allow potassium to flow into the cell rather than out of it. Their voltage dependence is regulated by the concentration of extracellular potassium; as external potassium is raised, the voltage range of the channel opening shifts to more positive voltages. The inward rectification is mainly due to the blockage of outward current by internal magnesium. Can be blocked by extracellular barium. In pancreatic cells, it forms KATP channels with ABCC8/SUR1. Can form cardiac and smooth muscle-type KATP channels with ABCC9. In Oryctolagus cuniculus (Rabbit), this protein is ATP-sensitive inward rectifier potassium channel 11 (KCNJ11).